We begin with the raw amino-acid sequence, 118 residues long: Large ribosomal subunit protein bL19 (118 aa).

It belongs to the bacterial ribosomal protein bL19 family.

This protein is located at the 30S-50S ribosomal subunit interface and may play a role in the structure and function of the aminoacyl-tRNA binding site. The chain is Large ribosomal subunit protein bL19 from Parafrankia sp. (strain EAN1pec).